The following is a 485-amino-acid chain: Membrane-bound lytic murein transglycosylase F (485 aa).

A signal peptide spans 1 to 29 (MFAHTALRQRCAKWLLATGLFLLLGACVE). The interval 30 to 267 (KPSTLERVKE…RLKDRYYGHV (238 aa)) is non-LT domain. The tract at residues 268–485 (DVLGYVGAYT…DKPADKSSPM (218 aa)) is LT domain. Glu-314 is a catalytic residue. The interval 465 to 485 (EGNLHVPGVNKDKPADKSSPM) is disordered. Residues 474–485 (NKDKPADKSSPM) are compositionally biased toward basic and acidic residues.

This sequence in the N-terminal section; belongs to the bacterial solute-binding protein 3 family. In the C-terminal section; belongs to the transglycosylase Slt family.

Its subcellular location is the cell outer membrane. The enzyme catalyses Exolytic cleavage of the (1-&gt;4)-beta-glycosidic linkage between N-acetylmuramic acid (MurNAc) and N-acetylglucosamine (GlcNAc) residues in peptidoglycan, from either the reducing or the non-reducing ends of the peptidoglycan chains, with concomitant formation of a 1,6-anhydrobond in the MurNAc residue.. Murein-degrading enzyme that degrades murein glycan strands and insoluble, high-molecular weight murein sacculi, with the concomitant formation of a 1,6-anhydromuramoyl product. Lytic transglycosylases (LTs) play an integral role in the metabolism of the peptidoglycan (PG) sacculus. Their lytic action creates space within the PG sacculus to allow for its expansion as well as for the insertion of various structures such as secretion systems and flagella. The protein is Membrane-bound lytic murein transglycosylase F of Pseudomonas putida (strain ATCC 700007 / DSM 6899 / JCM 31910 / BCRC 17059 / LMG 24140 / F1).